The sequence spans 387 residues: Succinate--CoA ligase [ADP-forming] subunit beta (387 aa).

Residues 9–245 (KDLLESYGLK…KSQENAKELK (237 aa)) enclose the ATP-grasp domain. Residues K46, 53–55 (GRG), E100, Y103, and E108 each bind ATP. Positions 200 and 214 each coordinate Mg(2+). Substrate-binding positions include N265 and 322–324 (GIV).

Belongs to the succinate/malate CoA ligase beta subunit family. As to quaternary structure, heterotetramer of two alpha and two beta subunits. Mg(2+) is required as a cofactor.

It catalyses the reaction succinate + ATP + CoA = succinyl-CoA + ADP + phosphate. The catalysed reaction is GTP + succinate + CoA = succinyl-CoA + GDP + phosphate. It participates in carbohydrate metabolism; tricarboxylic acid cycle; succinate from succinyl-CoA (ligase route): step 1/1. Functionally, succinyl-CoA synthetase functions in the citric acid cycle (TCA), coupling the hydrolysis of succinyl-CoA to the synthesis of either ATP or GTP and thus represents the only step of substrate-level phosphorylation in the TCA. The beta subunit provides nucleotide specificity of the enzyme and binds the substrate succinate, while the binding sites for coenzyme A and phosphate are found in the alpha subunit. This chain is Succinate--CoA ligase [ADP-forming] subunit beta, found in Francisella tularensis subsp. holarctica (strain OSU18).